We begin with the raw amino-acid sequence, 335 residues long: MASGGGSLGLIVFLLLLQPKPCEAWAAASVLSTSGFPSGFSEAPRDNPPPPTRVRMSKATTRSPFMNFSLVCGQPFMKIMGGVDAEEGKWPWQVSVRVRHMHVCGGSLINSQWVLTAAHCIYSRIQYNVKVGDRSVYRQNTSLVIPIKTIFVHPKFSTTIVVKNDIALLKLQHPVNFTTNIYPVCIPSESFPVKAGTKCWVTGWGKLVPGAPDVPTEILQEVDQNVILYEECNEMLKKATSSSVDLVKRGMVCGYKERGKDACQGDSGGPMSCEFENKWVQVGVVSWGISCGRKGYPGVYTDVAFYSKWLIAVVNQADCLHPVVFLVLLLCSLTS.

The first 24 residues, 1–24 (MASGGGSLGLIVFLLLLQPKPCEA), serve as a signal peptide directing secretion. N-linked (GlcNAc...) asparagine glycosylation occurs at N67. In terms of domain architecture, Peptidase S1 spans 79–315 (IMGGVDAEEG…YSKWLIAVVN (237 aa)). A disulfide bridge links C104 with C120. H119 acts as the Charge relay system in catalysis. N-linked (GlcNAc...) asparagine glycosylation occurs at N140. The Charge relay system role is filled by D165. A glycan (N-linked (GlcNAc...) asparagine) is linked at N176. Intrachain disulfides connect C199–C273, C232–C253, and C263–C291. S267 serves as the catalytic Charge relay system.

Belongs to the peptidase S1 family. In terms of tissue distribution, testis-specific. Mainly detected in round spermatids at all the eminiferous epithelial stages (at protein level).

The protein localises to the cytoplasm. Its subcellular location is the cell membrane. Functionally, plays a role in spermatogenesis. Involved in germ cell survival during meiosis. Lacks protease activity in vitro. This Mus musculus (Mouse) protein is Serine protease 42.